The chain runs to 681 residues: Glutamine--fructose-6-phosphate aminotransferase [isomerizing] 1 (681 aa).

Residue Cys-2 is the For GATase activity of the active site. Residues Cys-2–Gly-287 enclose the Glutamine amidotransferase type-2 domain. Ser-103 and Ser-243 each carry phosphoserine. The segment at Lys-295 to Val-662 is isomerase. 2 consecutive SIS domains span residues His-359–Ser-498 and Leu-530–Pro-671. Residues Thr-376–Ser-377, Ser-421–Ser-423, Thr-426, and His-577 each bind substrate.

Homotetramer, may also exist as homodimers.

The enzyme catalyses D-fructose 6-phosphate + L-glutamine = D-glucosamine 6-phosphate + L-glutamate. It participates in nucleotide-sugar biosynthesis; UDP-N-acetyl-alpha-D-glucosamine biosynthesis; alpha-D-glucosamine 6-phosphate from D-fructose 6-phosphate: step 1/1. Inhibited by 4,4'-dithiodipyridine. In terms of biological role, controls the flux of glucose into the hexosamine pathway. Most likely involved in regulating the availability of precursors for N- and O-linked glycosylation of proteins. Regulates the circadian expression of clock genes BMAL1 and CRY1. Has a role in fine tuning the metabolic fluctuations of cytosolic UDP-GlcNAc and its effects on hyaluronan synthesis that occur during tissue remodeling. The polypeptide is Glutamine--fructose-6-phosphate aminotransferase [isomerizing] 1 (Gfpt1) (Rattus norvegicus (Rat)).